The following is a 3420-amino-acid chain: Adhesin BmaC autotransporter (3420 aa).

Residues 1 to 72 (MPNLANQDFT…SLVMAGTAAA (72 aa)) form the signal peptide. Residues 3138–3420 (GPSGNNGIWA…AGSVGLRVRW (283 aa)) form the Autotransporter domain.

The protein resides in the cell surface. The protein localises to the cell outer membrane. In terms of biological role, fibronectin-binding protein, which is involved in adhesion to host cells and in the infective process. Mediates the binding of B.suis to the extracellular matrix and to non-phagocytic cells via cell-associated fibronectin. In Brucella suis biovar 1 (strain 1330), this protein is Adhesin BmaC autotransporter.